The primary structure comprises 340 residues: Pre-rRNA-processing protein esf-2 (340 aa).

2 stretches are compositionally biased toward basic and acidic residues: residues Met-1–Asp-12 and Asp-19–Lys-32. The tract at residues Met-1–Gly-103 is disordered. Residues Asp-44–Asp-64 show a composition bias toward acidic residues. Basic and acidic residues predominate over residues Ala-65–Ser-95. The 91-residue stretch at Gly-124–Ile-214 folds into the RRM domain. The disordered stretch occupies residues Ala-272–Pro-329.

Belongs to the ESF2/ABP1 family.

It localises to the nucleus. The protein resides in the nucleolus. In terms of biological role, involved in the small subunit (SSU) processome assembly and function, and in the 18S rRNA synthesis. Required for the early cleavages at sites A0, A1 and A2. The sequence is that of Pre-rRNA-processing protein esf-2 (esf-2) from Neurospora crassa (strain ATCC 24698 / 74-OR23-1A / CBS 708.71 / DSM 1257 / FGSC 987).